Reading from the N-terminus, the 164-residue chain is 17.8 kDa heat shock protein (164 aa).

The region spanning 20 to 154 (VVAGEARPPM…HAGNGKAAGD (135 aa)) is the sHSP domain. The disordered stretch occupies residues 68–93 (GEHEDANNAAKAGKASGEEEEENDGV).

This sequence belongs to the small heat shock protein (HSP20) family. May form oligomeric structures.

It is found in the cytoplasm. The polypeptide is 17.8 kDa heat shock protein (HSP17.8) (Oryza sativa subsp. japonica (Rice)).